The primary structure comprises 159 residues: MDLRIGQGYDVHALVPGRPLIIGGVTIPYERGLLGHSDADVLLHAITDALFGAAALGDIGRHFPDTATEFKGANSRVLLRECAARIARAGFTIQNVDSTVIAQAPKLAPHIDGMRANIAEDLNLPIDRVNVKAKTNEKLGYLGRGEGIEAQAAALLVRV.

A divalent metal cation-binding residues include Asp10 and His12. Residues 10–12 (DVH) and 36–37 (HS) contribute to the 4-CDP-2-C-methyl-D-erythritol 2-phosphate site. His44 provides a ligand contact to a divalent metal cation. Residues 58–60 (DIG) and Arg144 contribute to the 4-CDP-2-C-methyl-D-erythritol 2-phosphate site.

It belongs to the IspF family. In terms of assembly, homotrimer. It depends on a divalent metal cation as a cofactor.

It carries out the reaction 4-CDP-2-C-methyl-D-erythritol 2-phosphate = 2-C-methyl-D-erythritol 2,4-cyclic diphosphate + CMP. Its pathway is isoprenoid biosynthesis; isopentenyl diphosphate biosynthesis via DXP pathway; isopentenyl diphosphate from 1-deoxy-D-xylulose 5-phosphate: step 4/6. Its function is as follows. Involved in the biosynthesis of isopentenyl diphosphate (IPP) and dimethylallyl diphosphate (DMAPP), two major building blocks of isoprenoid compounds. Catalyzes the conversion of 4-diphosphocytidyl-2-C-methyl-D-erythritol 2-phosphate (CDP-ME2P) to 2-C-methyl-D-erythritol 2,4-cyclodiphosphate (ME-CPP) with a corresponding release of cytidine 5-monophosphate (CMP). The chain is 2-C-methyl-D-erythritol 2,4-cyclodiphosphate synthase from Paraburkholderia phymatum (strain DSM 17167 / CIP 108236 / LMG 21445 / STM815) (Burkholderia phymatum).